Reading from the N-terminus, the 429-residue chain is Ribosomal RNA small subunit methyltransferase B (429 aa).

S-adenosyl-L-methionine is bound by residues cysteine 254–lysine 260, aspartate 277, aspartate 303, and aspartate 322. Cysteine 375 acts as the Nucleophile in catalysis.

Belongs to the class I-like SAM-binding methyltransferase superfamily. RsmB/NOP family.

It is found in the cytoplasm. It carries out the reaction cytidine(967) in 16S rRNA + S-adenosyl-L-methionine = 5-methylcytidine(967) in 16S rRNA + S-adenosyl-L-homocysteine + H(+). In terms of biological role, specifically methylates the cytosine at position 967 (m5C967) of 16S rRNA. The chain is Ribosomal RNA small subunit methyltransferase B from Escherichia coli (strain SE11).